Here is a 1902-residue protein sequence, read N- to C-terminus: Putative surface cell antigen sca1 (1902 aa).

A signal peptide spans 1 to 28 (MNKLTEQHLLKKSRFLKYSLLASISVGA). Disordered stretches follow at residues 140 to 273 (GIEK…TFVP), 420 to 485 (QGVF…SRTA), 707 to 729 (TTTT…YSSS), 858 to 885 (NRRR…AWGN), and 1470 to 1548 (KSES…SDGD). Polar residues-rich tracts occupy residues 146-159 (QSQN…TEQM) and 168-197 (TASS…SPEH). Positions 199–212 (TTAPGTPSSTPATP) are enriched in low complexity. Polar residues predominate over residues 225 to 238 (LGANTPPNINTNSK). Low complexity predominate over residues 246–264 (SSSGPQQQAVQSSSQVKSE). Residues 423-439 (FNKNKSSGGNARKSSAG) are compositionally biased toward polar residues. Basic and acidic residues predominate over residues 445–482 (KKQEAQKQLSEIKKQEKAIKTASDKAKEVAASAKKETS). Residues 863–874 (RDGETSKQRTVD) are compositionally biased toward basic and acidic residues. Residues 1491–1507 (LSSLPALASSNESALAL) show a composition bias toward low complexity. The span at 1521 to 1538 (SSEDEESYDSGFEEEEET) shows a compositional bias: acidic residues. The Autotransporter domain maps to 1618–1902 (ESHIKRGLWM…QGSVKLKVNL (285 aa)).

It is found in the cell outer membrane. This chain is Putative surface cell antigen sca1 (sca1), found in Rickettsia conorii (strain ATCC VR-613 / Malish 7).